The following is a 324-amino-acid chain: Alkanal monooxygenase beta chain (324 aa).

Belongs to the bacterial luciferase oxidoreductase family. As to quaternary structure, heterodimer of an alpha and a beta chain.

The catalysed reaction is a long-chain fatty aldehyde + FMNH2 + O2 = a long-chain fatty acid + hnu + FMN + H2O + 2 H(+). Its function is as follows. Light-emitting reaction in luminous bacteria. The specific role of the beta subunit is unknown, but it is absolutely required for bioluminescence activity. The protein is Alkanal monooxygenase beta chain (luxB) of Photorhabdus luminescens (Xenorhabdus luminescens).